Here is a 150-residue protein sequence, read N- to C-terminus: Large ribosomal subunit protein bL9 (150 aa).

It belongs to the bacterial ribosomal protein bL9 family.

In terms of biological role, binds to the 23S rRNA. This Thioalkalivibrio sulfidiphilus (strain HL-EbGR7) protein is Large ribosomal subunit protein bL9.